The chain runs to 410 residues: Cytochrome P450(MEG) (410 aa).

Position 355 (Cys-355) interacts with heme.

It belongs to the cytochrome P450 family. The cofactor is heme.

The protein resides in the cytoplasm. The catalysed reaction is reduced 2[4Fe-4S]-[ferredoxin] + progesterone + O2 + 2 H(+) = 15beta-hydroxyprogesterone + oxidized 2[4Fe-4S]-[ferredoxin] + H2O. Functionally, has the capacity to hydroxylate certain steroids in the 15-beta position. Also hydroxylates progesterone in the 11-alpha and 9-beta position. The sequence is that of Cytochrome P450(MEG) (cyp106A2) from Priestia megaterium (Bacillus megaterium).